Reading from the N-terminus, the 80-residue chain is Conotoxin SmIVB (80 aa).

The N-terminal stretch at 1 to 21 (MGMRMMFTVFLLVVLATTVVS) is a signal peptide. A propeptide spanning residues 22 to 38 (IPSDRASDGRNAEVNER) is cleaved from the precursor. At Pro-40 the chain carries 4-hydroxyproline. O-linked (HexNAc...) serine glycosylation occurs at Ser-45. 5 positions are modified to 4-hydroxyproline: Pro-55, Pro-60, Pro-61, Pro-70, and Pro-72. Serine amide is present on Ser-75. Positions 76-80 (GRRNH) are excised as a propeptide.

The protein belongs to the conotoxin A superfamily. Post-translationally, contains 3 disulfide bonds. In terms of tissue distribution, expressed by the venom duct.

It is found in the secreted. Its function is as follows. Neurotoxin with probable activity on sodium channel. Induces intense repetitive firing of the frog neuromuscular junction, leading to a tetanic contracture in muscle fiber (spastic paralysis). In vivo, shows the same effect as the whole venom when injected on fish prey. The protein is Conotoxin SmIVB of Conus stercusmuscarum (Fly-specked cone).